A 313-amino-acid polypeptide reads, in one-letter code: Arabinooligosaccharides transport system permease protein AraP (313 aa).

6 helical membrane passes run 39–59, 91–111, 126–146, 176–196, 224–244, and 281–301; these read FVLSFLVFFLYPIISVFIMSF, LEYTFWTLIVLIPVPLLLAIF, ALFIPALTSTIVAGIIFRLIF, MFLMVLLASWRWMGINILYFL, ITLPFLKPVTVYVLTISIIGG, and MGYGAAIGIVLLIVILVVSLI. Residues 87 to 302 enclose the ABC transmembrane type-1 domain; the sequence is LWNTLEYTFW…IVILVVSLIS (216 aa).

This sequence belongs to the binding-protein-dependent transport system permease family. MalFG subfamily. As to quaternary structure, the complex is composed of two ATP-binding proteins (MsmX), two transmembrane proteins (AraP and AraQ) and a solute-binding protein (AraN).

The protein localises to the cell membrane. Functionally, part of the ABC transporter complex AraNPQ involved in the uptake of arabinooligosaccharides. Transports alpha-1,5-arabinooligosaccharides, at least up to four L-arabinosyl units. Responsible for the translocation of the substrate across the membrane. The sequence is that of Arabinooligosaccharides transport system permease protein AraP from Bacillus subtilis (strain 168).